Reading from the N-terminus, the 471-residue chain is Tyrosine--tRNA ligase (471 aa).

Tyrosine 41 contributes to the L-tyrosine binding site. The short motif at 46 to 55 (PTAPSLHVGN) is the 'HIGH' region element. Tyrosine 176 and glutamine 180 together coordinate L-tyrosine. A 'KMSKS' region motif is present at residues 236–240 (KFGKT). Lysine 239 contacts ATP. Residues 403–471 (DLITHILQKV…GKKHLAAVFY (69 aa)) form the S4 RNA-binding domain.

This sequence belongs to the class-I aminoacyl-tRNA synthetase family. TyrS type 1 subfamily. As to quaternary structure, homodimer.

The protein resides in the cytoplasm. The enzyme catalyses tRNA(Tyr) + L-tyrosine + ATP = L-tyrosyl-tRNA(Tyr) + AMP + diphosphate + H(+). Its function is as follows. Catalyzes the attachment of tyrosine to tRNA(Tyr) in a two-step reaction: tyrosine is first activated by ATP to form Tyr-AMP and then transferred to the acceptor end of tRNA(Tyr). The chain is Tyrosine--tRNA ligase from Tropheryma whipplei (strain Twist) (Whipple's bacillus).